A 216-amino-acid chain; its full sequence is GTP-binding nuclear protein spi1 (216 aa).

Residues N6 to N170 enclose the Small GTPase Ran-type domain. D17 to T24 is a binding site for GTP. At T20 the chain carries Phosphothreonine. A switch-I region spans residues K36–V44. GTP is bound by residues G67, N121 to D124, and S149 to K151. Positions G67–Q83 are switch-II.

It belongs to the small GTPase superfamily. Ran family. Oligomer of dis3, pim1 and spi1. Found in a nuclear export complex with RanGTP, exportin and pre-miRNA. Interacts with fft3.

The protein localises to the nucleus. GTP-binding protein involved in nucleocytoplasmic transport. Required for the import of protein into the nucleus and also for RNA export. This is GTP-binding nuclear protein spi1 (spi1) from Schizosaccharomyces pombe (strain 972 / ATCC 24843) (Fission yeast).